Here is a 277-residue protein sequence, read N- to C-terminus: F41 fimbrial protein (277 aa).

The first 22 residues, 1–22 (MKKTLIALAVAASAAVSGSVMA), serve as a signal peptide directing secretion.

Belongs to the fimbrial K88 protein family.

It is found in the fimbrium. Fimbriae (also called pili), polar filaments radiating from the surface of the bacterium to a length of 0.5-1.5 micrometers and numbering 100-300 per cell, enable bacteria to colonize the epithelium of specific host organs. This is F41 fimbrial protein (FimF41a) from Escherichia coli.